Reading from the N-terminus, the 151-residue chain is 3-dehydroquinate dehydratase (151 aa).

The Proton acceptor role is filled by Y26. N75, H81, and D88 together coordinate substrate. Residue H101 is the Proton donor of the active site. Residues 102 to 103 and R112 each bind substrate; that span reads LS.

This sequence belongs to the type-II 3-dehydroquinase family. In terms of assembly, homododecamer.

It catalyses the reaction 3-dehydroquinate = 3-dehydroshikimate + H2O. It participates in metabolic intermediate biosynthesis; chorismate biosynthesis; chorismate from D-erythrose 4-phosphate and phosphoenolpyruvate: step 3/7. In terms of biological role, catalyzes a trans-dehydration via an enolate intermediate. The polypeptide is 3-dehydroquinate dehydratase (Shewanella halifaxensis (strain HAW-EB4)).